A 387-amino-acid chain; its full sequence is 3-ketoacyl-CoA thiolase (387 aa).

Cys-91 functions as the Acyl-thioester intermediate in the catalytic mechanism. Residues His-343 and Cys-373 each act as proton acceptor in the active site.

It belongs to the thiolase-like superfamily. Thiolase family. As to quaternary structure, heterotetramer of two alpha chains (FadB) and two beta chains (FadA).

The protein resides in the cytoplasm. The enzyme catalyses an acyl-CoA + acetyl-CoA = a 3-oxoacyl-CoA + CoA. It functions in the pathway lipid metabolism; fatty acid beta-oxidation. Catalyzes the final step of fatty acid oxidation in which acetyl-CoA is released and the CoA ester of a fatty acid two carbons shorter is formed. The protein is 3-ketoacyl-CoA thiolase of Klebsiella pneumoniae subsp. pneumoniae (strain ATCC 700721 / MGH 78578).